The sequence spans 554 residues: Putative acyl-coenzyme A synthetase (554 aa).

Leucine 195–lysine 206 contributes to the AMP binding site.

Belongs to the ATP-dependent AMP-binding enzyme family.

The protein is Putative acyl-coenzyme A synthetase of Emericella nidulans (strain FGSC A4 / ATCC 38163 / CBS 112.46 / NRRL 194 / M139) (Aspergillus nidulans).